The following is a 979-amino-acid chain: Oncostatin-M-specific receptor subunit beta (979 aa).

Residues 1-27 (MALFAVFQTTFFLTLLSLRTYQSEVLA) form the signal peptide. The Extracellular portion of the chain corresponds to 28-740 (ERLPLTPVSL…VTTPDEHSSM (713 aa)). The N-linked (GlcNAc...) asparagine glycan is linked to Asn-163. Cysteines 245 and 255 form a disulfide. Asn-326 and Asn-380 each carry an N-linked (GlcNAc...) asparagine glycan. 4 Fibronectin type-III domains span residues 335 to 428 (NPFS…TLEA), 433 to 528 (APDV…DPEN), 529 to 623 (KEVE…SQEL), and 625 to 736 (PSDN…TPDE). The WSXWS motif signature appears at 415–419 (WSEWS). 2 N-linked (GlcNAc...) asparagine glycosylation sites follow: Asn-446 and Asn-580. Residues 741 to 761 (LIHILLPMVFCVLLIMVMCYL) form a helical membrane-spanning segment. The Cytoplasmic portion of the chain corresponds to 762-979 (KSQWIKETCY…TLLDPGEHYC (218 aa)). A Box 1 motif motif is present at residues 770 to 778 (CYPDIPDPY). Residues Ser-826 and Ser-889 each carry the phosphoserine modification.

The protein belongs to the type I cytokine receptor family. Type 2 subfamily. In terms of assembly, heterodimer composed of OSMR and IL6ST (type II OSM receptor). Heterodimer with IL31RA to form the IL31 receptor. In terms of tissue distribution, expressed in keratinocytes (at protein level). Expressed at relatively high levels in all neural cells as well as fibroblast and epithelial cells.

It is found in the membrane. Its function is as follows. Associates with IL31RA to form the IL31 receptor. Binds IL31 to activate STAT3 and possibly STAT1 and STAT5. Capable of transducing OSM-specific signaling events. This is Oncostatin-M-specific receptor subunit beta (OSMR) from Homo sapiens (Human).